Here is a 105-residue protein sequence, read N- to C-terminus: Malonate decarboxylase acyl carrier protein (105 aa).

S28 is modified (O-(phosphoribosyl dephospho-coenzyme A)serine).

The protein belongs to the MdcC family. In terms of processing, covalently binds the prosthetic group of malonate decarboxylase.

Its subcellular location is the cytoplasm. In terms of biological role, subunit of malonate decarboxylase, it is an acyl carrier protein to which acetyl and malonyl thioester residues are bound via a 2'-(5''-phosphoribosyl)-3'-dephospho-CoA prosthetic group and turn over during the catalytic mechanism. The polypeptide is Malonate decarboxylase acyl carrier protein (Xanthomonas euvesicatoria pv. vesicatoria (strain 85-10) (Xanthomonas campestris pv. vesicatoria)).